Reading from the N-terminus, the 990-residue chain is LPTLSHEAFGDIYLFEGELPNTLTTSNNNQLSLSKQHAKDGEQSLKWQYQPQATLTLNNIVNYQDDKNTATPLTFMMWIYNEKPQSSPLTLAFKQNNKIALSFNAELNFTGWRGIAVPFRDMQGSATGQLDQLVITAPNQAGTLFFDQIIMSVPLDNRWAVPDYQTPYVNNAVNTMVSKNWSALLMYDQMFQAHYPTLNFDTEFRDDQTEMASIYQRFEYYQGIRSDKKITPDMLDKHLALWEKLVLTQHADGSITGKALDHPNRQHFMKVEGVFSEGTQKALLDANMLRDVGKTLLQTAIYLRSDSLSATDRKKLEERYLLGTRYVLEQGFTRGSGYQIITHVGYQTRELFDAWFIGRHVLAKNNLLAPTQQAMMWYNATGRIFEKNNEIVDANVDILNTQLQWMIKSLLMLPDYQQRQQALAQLQSWLNKTILSSKGVAGGFKSDGSIFHHSQHYPAYAKDAFGGLAPSVYALSDSPFRLSTSAHERLKDVLLKMRIYTKETQIPVVLSGRHPTGLHKIGIAPFKWMALAGTPDGKQKLDTTLSAAYAKLDNKTHFEGINAESEPVGAWAMNYASMAIQRRASTQSPQQSWLAIARGFSRYLVGNESYENNNRYGRYLQYGQLEIIPADLTQSGFSHAGWDWNRYPGTTTIHLPYNELEAKLNQLPAAGIEEMLLSTESYSGANTLNNNSMFAMKLHGHSKYQQQSLRANKSYFLFDNRVIALGSGIENDDKQHTTETTLFQFAVPKLQSVIINGKKVNQLDTQLTLNNADTLIDPTGNLYKLTKGQTVKFSYQKQHSLDDRNSKPTEQLFATAVISHGKAPSNENYEYAIAIEAQNNKAPEYTVLQHNDQLHAVKDKITQEEGYAFFEATKLKSADATLLSSDAPVMVMAKIQNQQLTLSIVNPDLNLYQGREKDQFDDKGNQIEVSVYSRHWLTAESQSTNSTITVKGIWKLTTPQPGVIIKHHNNNTLITTTTIQATPTVINLVK.

The active-site Proton acceptor is H453. The active-site Proton donor is Y460.

The protein belongs to the polysaccharide lyase 8 family.

It carries out the reaction Exolytic removal of Delta(4)-unsaturated disaccharide residues from the non-reducing ends of both polymeric chondroitin/dermatan sulfates and their oligosaccharide fragments.. With respect to regulation, inhibited by Zn(2+), whereas Ni(2+), Fe(2+), and Cu(2+) have little or no effect on activity. In terms of biological role, broad-specificity glycosaminoglycan lyase, which acts in an exolytic fashion, and preferentially degrades the tetra- and hexasaccharide derivatives of chondroitin sulfate and dermatan sulfate produced by the chondroitin sulfate ABC endolyase, to yield the respective disaccharides. To a lesser extent, is also able to split off disaccharide residues directly from polymeric chondroitin 4- and 6-sulfate, dermatan sulfate, chondroitin, and hyaluronan. Is not active against keratan sulfate, heparan sulfate, and heparin. The chain is Chondroitin sulfate ABC exolyase (ChABCII) from Proteus vulgaris.